The chain runs to 303 residues: Geranylgeranyl pyrophosphate synthase (303 aa).

K32, R35, and H64 together coordinate isopentenyl diphosphate. Mg(2+) is bound by residues D71 and D75. R80 lines the dimethylallyl diphosphate pocket. Residue R81 participates in isopentenyl diphosphate binding. The dimethylallyl diphosphate site is built by K158, T159, Q192, K209, and K219.

The protein belongs to the FPP/GGPP synthase family. As to quaternary structure, homooligomer. The cofactor is Mg(2+).

It is found in the cytoplasm. It catalyses the reaction isopentenyl diphosphate + dimethylallyl diphosphate = (2E)-geranyl diphosphate + diphosphate. It carries out the reaction isopentenyl diphosphate + (2E)-geranyl diphosphate = (2E,6E)-farnesyl diphosphate + diphosphate. The enzyme catalyses isopentenyl diphosphate + (2E,6E)-farnesyl diphosphate = (2E,6E,10E)-geranylgeranyl diphosphate + diphosphate. The protein operates within isoprenoid biosynthesis; farnesyl diphosphate biosynthesis; farnesyl diphosphate from geranyl diphosphate and isopentenyl diphosphate: step 1/1. Its pathway is isoprenoid biosynthesis; geranyl diphosphate biosynthesis; geranyl diphosphate from dimethylallyl diphosphate and isopentenyl diphosphate: step 1/1. It participates in isoprenoid biosynthesis; geranylgeranyl diphosphate biosynthesis; geranylgeranyl diphosphate from farnesyl diphosphate and isopentenyl diphosphate: step 1/1. Functionally, catalyzes the trans-addition of the three molecules of IPP onto DMAPP to form geranylgeranyl pyrophosphate, an important precursor of carotenoids and geranylated proteins. This is Geranylgeranyl pyrophosphate synthase (ggps1) from Dictyostelium discoideum (Social amoeba).